Here is a 457-residue protein sequence, read N- to C-terminus: MEISIKNIFEKADFYLGKKIIVNGWIRNCRFQKKLIFIELNDGTFLENFQIVYKNVDLEKIKDILQIGTSLKVEGFLKKNEKQEKNLEILAQNITLLGSSDFSYPIQPKKHSKSFLRTIPHLRTRTKLFGAVFRIRSTAFFALHHFFHKKGFFHINTPIITPNDGEGAGELFQLTSLNLERLSQEKPSTINYQKDFFGKKVFLTVTGQLEAEAMALALNKVYTFGPTFRAEKSNTPRHAAEFWMLEPEMAFCDLKQNLKVAQEMLQEVVVQCLQENQKDIEFLDQTVRNGLLQELKNVVQEKEFLVITYQKAIEILASSGVAFENKVFYGSDLATEHEKFLTEKHFQKPVFIIDWPKEIKAFYMKNNPDQKTVAAMDLLIPRVGELIGGSQREENLAVLIEKMQQMKIPQKEFEWYLDLRRFGSCIHSGFGLGFERLLLFLTGLDNIRDVIAFPRTY.

It belongs to the class-II aminoacyl-tRNA synthetase family. As to quaternary structure, homodimer.

The protein resides in the cytoplasm. It carries out the reaction tRNA(Asn) + L-asparagine + ATP = L-asparaginyl-tRNA(Asn) + AMP + diphosphate + H(+). The polypeptide is Asparagine--tRNA ligase (Phytoplasma australiense).